The following is a 218-amino-acid chain: Large ribosomal subunit protein uL3 (218 aa).

The interval K124 to A162 is disordered.

This sequence belongs to the universal ribosomal protein uL3 family. As to quaternary structure, part of the 50S ribosomal subunit. Forms a cluster with proteins L14 and L19.

Functionally, one of the primary rRNA binding proteins, it binds directly near the 3'-end of the 23S rRNA, where it nucleates assembly of the 50S subunit. The protein is Large ribosomal subunit protein uL3 of Synechococcus sp. (strain CC9605).